A 189-amino-acid chain; its full sequence is Phosphoheptose isomerase (189 aa).

The 156-residue stretch at 34–189 (AVETLKNGNK…CQIIDNELSH (156 aa)) folds into the SIS domain. 49 to 51 (NGG) contributes to the substrate binding site. His-58 and Glu-62 together coordinate Zn(2+). Substrate-binding positions include Glu-62, 91–92 (ND), 117–119 (STS), Ser-122, and Gln-169. Positions 169 and 177 each coordinate Zn(2+).

This sequence belongs to the SIS family. GmhA subfamily. In terms of assembly, homotetramer. Requires Zn(2+) as cofactor.

It localises to the cytoplasm. The enzyme catalyses 2 D-sedoheptulose 7-phosphate = D-glycero-alpha-D-manno-heptose 7-phosphate + D-glycero-beta-D-manno-heptose 7-phosphate. It functions in the pathway carbohydrate biosynthesis; D-glycero-D-manno-heptose 7-phosphate biosynthesis; D-glycero-alpha-D-manno-heptose 7-phosphate and D-glycero-beta-D-manno-heptose 7-phosphate from sedoheptulose 7-phosphate: step 1/1. Its function is as follows. Catalyzes the isomerization of sedoheptulose 7-phosphate in D-glycero-D-manno-heptose 7-phosphate. The protein is Phosphoheptose isomerase of Aliarcobacter butzleri (strain RM4018) (Arcobacter butzleri).